Here is a 214-residue protein sequence, read N- to C-terminus: UPF0111 protein MJ0629 (214 aa).

Belongs to the UPF0111 family.

This chain is UPF0111 protein MJ0629, found in Methanocaldococcus jannaschii (strain ATCC 43067 / DSM 2661 / JAL-1 / JCM 10045 / NBRC 100440) (Methanococcus jannaschii).